The following is a 168-amino-acid chain: Photosystem I assembly protein Ycf3 (168 aa).

3 TPR repeats span residues 35–68 (AFTYYRDGMSAQSEGNYAEALQNYYEAMRLEMDP), 72–105 (SYILYNIGLIHTSNGEHTKALEYYFRALERNPFL), and 120–153 (GEQAIRQGDSEIAEAWFDQAAEYWKQAIALTPGN).

This sequence belongs to the Ycf3 family.

It is found in the plastid. It localises to the chloroplast thylakoid membrane. In terms of biological role, essential for the assembly of the photosystem I (PSI) complex. May act as a chaperone-like factor to guide the assembly of the PSI subunits. The polypeptide is Photosystem I assembly protein Ycf3 (Pelargonium hortorum (Common geranium)).